Consider the following 346-residue polypeptide: [LysW]-lysine/[LysW]-ornithine hydrolase (346 aa).

Histidine 68 is a binding site for Zn(2+). Residue aspartate 70 is part of the active site. Aspartate 92 is a binding site for Zn(2+). The active-site Proton acceptor is glutamate 122. The Zn(2+) site is built by glutamate 123, glutamate 146, and histidine 317.

Belongs to the peptidase M20A family. LysK subfamily. Requires Zn(2+) as cofactor. It depends on Co(2+) as a cofactor.

It is found in the cytoplasm. It carries out the reaction [amino-group carrier protein]-C-terminal-gamma-(L-lysyl)-L-glutamate + H2O = [amino-group carrier protein]-C-terminal-L-glutamate + L-lysine. The enzyme catalyses [amino-group carrier protein]-C-terminal-gamma-(L-ornithyl)-L-glutamate + H2O = [amino-group carrier protein]-C-terminal-L-glutamate + L-ornithine. The protein operates within amino-acid biosynthesis; L-lysine biosynthesis via AAA pathway; L-lysine from L-alpha-aminoadipate (Thermus route): step 5/5. It participates in amino-acid biosynthesis; L-arginine biosynthesis. Functionally, catalyzes the release of L-lysine from [LysW]-gamma-L-lysine and the release of L-ornithine from [LysW]-L-ornithine. The sequence is that of [LysW]-lysine/[LysW]-ornithine hydrolase from Saccharolobus islandicus (strain M.16.27) (Sulfolobus islandicus).